Reading from the N-terminus, the 262-residue chain is Acyl-[acyl-carrier-protein]--UDP-N-acetylglucosamine O-acyltransferase (262 aa).

This sequence belongs to the transferase hexapeptide repeat family. LpxA subfamily. In terms of assembly, homotrimer.

Its subcellular location is the cytoplasm. It catalyses the reaction a (3R)-hydroxyacyl-[ACP] + UDP-N-acetyl-alpha-D-glucosamine = a UDP-3-O-[(3R)-3-hydroxyacyl]-N-acetyl-alpha-D-glucosamine + holo-[ACP]. Its pathway is glycolipid biosynthesis; lipid IV(A) biosynthesis; lipid IV(A) from (3R)-3-hydroxytetradecanoyl-[acyl-carrier-protein] and UDP-N-acetyl-alpha-D-glucosamine: step 1/6. Functionally, involved in the biosynthesis of lipid A, a phosphorylated glycolipid that anchors the lipopolysaccharide to the outer membrane of the cell. The chain is Acyl-[acyl-carrier-protein]--UDP-N-acetylglucosamine O-acyltransferase from Blochmanniella floridana.